A 230-amino-acid chain; its full sequence is MQRGKKYRAHKEKVDSTKFFSIDKAVELAKSTSYTKFDGTLEIATKVNYKSLQNIRGTISLPHGTGKKIRVLVFCKGDKQNDAKAAGADFVGDTDLIEKVAGGWTDFDACVATPDMMKDVGKLGPILGRKGLMPKPKAGTVTTDVAKAVNELKAGRIEYRPDKGGVVHLGVGKVSFDNTKLIENIRTVVQTLMRDKPSDAKGEYLKTFSISPTMGVGVKVDVKELVNTSI.

This sequence belongs to the universal ribosomal protein uL1 family. As to quaternary structure, part of the 50S ribosomal subunit.

In terms of biological role, binds directly to 23S rRNA. The L1 stalk is quite mobile in the ribosome, and is involved in E site tRNA release. Its function is as follows. Protein L1 is also a translational repressor protein, it controls the translation of the L11 operon by binding to its mRNA. The sequence is that of Large ribosomal subunit protein uL1 from Leptospira interrogans serogroup Icterohaemorrhagiae serovar copenhageni (strain Fiocruz L1-130).